Reading from the N-terminus, the 86-residue chain is Neurotoxin homolog NL1 (86 aa).

The first 21 residues, 1-21 (MKTLLLTLVVVTMVCMDLGYT), serve as a signal peptide directing secretion. 4 cysteine pairs are disulfide-bonded: C24/C45, C38/C62, C66/C78, and C79/C84.

Belongs to the three-finger toxin family. Short-chain subfamily. Orphan group VIII (haditoxin) sub-subfamily. As to quaternary structure, homodimer; non-covalently linked. As to expression, expressed by the venom gland.

It localises to the secreted. Functionally, antagonist of muscle and neuronal nicotinic acetylcholine receptors (nAChR) with highest affinity for neuronal alpha-7/CHRNA7 nAChRs. The sequence is that of Neurotoxin homolog NL1 from Naja atra (Chinese cobra).